Consider the following 147-residue polypeptide: Hemoglobin subunit epsilon-1 (147 aa).

One can recognise a Globin domain in the interval 3–147 (HFTAEEKAAI…VATALAHKYH (145 aa)). Heme b is bound by residues His64 and His93.

The protein belongs to the globin family. As to quaternary structure, heterotetramer of two epsilon chains and two alpha chains. In terms of tissue distribution, red blood cells.

In terms of biological role, beta-type chain found in early embryos. This chain is Hemoglobin subunit epsilon-1 (HBE1), found in Capra hircus (Goat).